The sequence spans 59 residues: Photosystem II reaction center protein K (59 aa).

A propeptide spanning residues 1–22 (MLNIFSLIGLNSALYSSSCFFA) is cleaved from the precursor. A helical transmembrane segment spans residues 30-50 (FLSPIVDFMPVIPLLFFLLAF).

This sequence belongs to the PsbK family. PSII is composed of 1 copy each of membrane proteins PsbA, PsbB, PsbC, PsbD, PsbE, PsbF, PsbH, PsbI, PsbJ, PsbK, PsbL, PsbM, PsbT, PsbX, PsbY, PsbZ, Psb30/Ycf12, at least 3 peripheral proteins of the oxygen-evolving complex and a large number of cofactors. It forms dimeric complexes.

The protein localises to the plastid. The protein resides in the chloroplast thylakoid membrane. Its function is as follows. One of the components of the core complex of photosystem II (PSII). PSII is a light-driven water:plastoquinone oxidoreductase that uses light energy to abstract electrons from H(2)O, generating O(2) and a proton gradient subsequently used for ATP formation. It consists of a core antenna complex that captures photons, and an electron transfer chain that converts photonic excitation into a charge separation. The chain is Photosystem II reaction center protein K from Silene latifolia (White campion).